Consider the following 72-residue polypeptide: Large ribosomal subunit protein uL29 (72 aa).

The protein belongs to the universal ribosomal protein uL29 family.

The chain is Large ribosomal subunit protein uL29 from Prochlorococcus marinus (strain MIT 9515).